Reading from the N-terminus, the 107-residue chain is MLILLRLSEVCVNFVIIIGIPLLIEASILCIQNILELLLKGIGILKFNRYLHTIILRLFFLSFYMLHFPITLSILAFQLPLNLLTLSQASFHLPRSHMILYQQQECY.

2 helical membrane-spanning segments follow: residues 11-31 and 58-78; these read CVNF…ILCI and LFFL…LAFQ.

The protein localises to the mitochondrion membrane. This is an uncharacterized protein from Saccharomyces cerevisiae (strain ATCC 204508 / S288c) (Baker's yeast).